The chain runs to 241 residues: Ribosomal RNA small subunit methyltransferase J (241 aa).

Residues 94-95 (RD) and aspartate 163 each bind S-adenosyl-L-methionine.

It belongs to the methyltransferase superfamily. RsmJ family.

Its subcellular location is the cytoplasm. The catalysed reaction is guanosine(1516) in 16S rRNA + S-adenosyl-L-methionine = N(2)-methylguanosine(1516) in 16S rRNA + S-adenosyl-L-homocysteine + H(+). In terms of biological role, specifically methylates the guanosine in position 1516 of 16S rRNA. In Francisella tularensis subsp. tularensis (strain FSC 198), this protein is Ribosomal RNA small subunit methyltransferase J.